A 1372-amino-acid chain; its full sequence is Collagen alpha-2(I) chain (1372 aa).

Positions 1–22 are cleaved as a signal peptide; the sequence is MLSFVDTRTLLLLAVTSCLATC. Pyrrolidone carboxylic acid is present on Gln-23. The propeptide at 23 to 85 is N-terminal propeptide; it reads QYLQSGSVRK…PPGLTGNFAA (63 aa). The segment at 28 to 1135 is disordered; it reads GSVRKGPTGD…DQPRSQPSLR (1108 aa). The segment covering 59-77 has biased composition (pro residues); that stretch reads MGPPGPPGSPGPPGSPAPP. Lys-90 carries the post-translational modification Allysine. The span at 95 to 146 shows a compositional bias: low complexity; it reads GPGPMGLMGPRGPPGAVGAPGPQGFQGPAGEPGEPGQTGPAGPRGPAGSPGK. The span at 147–161 shows a compositional bias: basic and acidic residues; the sequence is AGEDGHPGKPGRPGE. The residue at position 183 (Lys-183) is a 5-hydroxylysine; alternate. Lys-183 carries an O-linked (Gal...) hydroxylysine; alternate glycan. 7 stretches are compositionally biased toward low complexity: residues 231 to 260, 285 to 299, 306 to 327, 336 to 351, 390 to 416, 476 to 495, and 519 to 537; these read VGAPGPAGARGSDGSVGPVGPAGPIGSAGP, AGPRGEVGLPGLSGP, PGTNGLTGAKGATGLPGVAGAP, PGPAGAAGATGARGLV, PGEAGSAGPAGPPGLRGSPGSRGLPGA, LPGIDGRPGPIGPAGPRGEA, and PGLAGARGAPGPDGNNGAQ. Gly residues predominate over residues 544–553; sequence GVQGGKGEQG. Residues 600–639 are compositionally biased toward low complexity; it reads PGESGAAGPSGPIGSRGPSGAPGPDGNKGEAGAVGAPGSA. Residues 640 to 649 are compositionally biased toward gly residues; it reads GASGPGGLPG. Low complexity-rich tracts occupy residues 681-716 and 725-743; these read RGIPGAVGAPGPAGASGDRGEAGAAGPSGPAGPRGS and PAGPNGFAGPAGAAGQPGA. Basic and acidic residues predominate over residues 744–753; sequence KGEKGTKGPK. Low complexity predominate over residues 755-771; the sequence is ENGIVGPTGSVGAAGPS. Residues 781–790 are compositionally biased toward gly residues; the sequence is GSRGDGGPPG. 5 stretches are compositionally biased toward low complexity: residues 792 to 801, 855 to 882, 905 to 927, 957 to 978, and 987 to 1007; these read TGFPGAAGRT, SGEPGTAGAPGTAGPQGLLGAPGILGLP, ISGPPGARGPPGAVGSPGVNGAP, PGSIGPTGAAGAPGPHGSVGPA, and PGPAGSVGPVGAVGPRGPSGP. Residues 1011 to 1022 are compositionally biased toward basic and acidic residues; the sequence is RGDKGEPGDKGH. Over residues 1095–1107 the composition is skewed to pro residues; the sequence is AGPPGPPGPPGPP. Positions 1126 to 1372 are cleaved as a propeptide — C-terminal propeptide; the sequence is DQPRSQPSLR…RVEVGPVCFK (247 aa). Positions 1139-1372 constitute a Fibrillar collagen NC1 domain; it reads YEVDATLKSL…RVEVGPVCFK (234 aa). 3 disulfide bridges follow: Cys-1169-Cys-1201, Cys-1209-Cys-1370, and Cys-1278-Cys-1323. Positions 1187, 1189, 1190, 1192, and 1195 each coordinate Ca(2+). Residue Asn-1273 is glycosylated (N-linked (GlcNAc...) asparagine).

It belongs to the fibrillar collagen family. Trimers of one alpha 2(I) and two alpha 1(I) chains. Interacts (via C-terminus) with TMEM131 (via PapD-L domain); the interaction is direct and is involved in assembly and TRAPPIII ER-to-Golgi transport complex-dependent secretion of collagen. Prolines at the third position of the tripeptide repeating unit (G-X-Y) are hydroxylated in some or all of the chains. As to expression, expressed in kidney glomeruli.

It localises to the secreted. Its subcellular location is the extracellular space. The protein resides in the extracellular matrix. Type I collagen is a member of group I collagen (fibrillar forming collagen). The chain is Collagen alpha-2(I) chain (Col1a2) from Mus musculus (Mouse).